We begin with the raw amino-acid sequence, 2333 residues long: MNTTNCFIALVHAIREIRAFFLSRATGKMEFTLYNGERKTFYSRPNNHDNCWLNTILQLFRYVDEPFFDWVYNSPENLTLAAIKQLEELTGLELHEGGPPALVIWNIKHLLQTGIGTASRPSEVCMVDGTDMCLADFHAGIFLKGQEHAVFACVTSNGWYAIDDEDFYPWTPDPSDVLVFVPYDQEPLNGGWKANVQRKLKGAGQSSPATGSQNQSGNTGSIINNYYMQQYQNSMDTQLGDNAISGGSNEGSTDTTSTHTTNTQNNDWFSKLASSAFTGLFGALLADKKTEETTLLEDRILTTRNGHTTSTTQSSVGVTYGYSTEEDHVAGPNTSGLETRVVQAERFFKKFLFDWTTDKPFGHLEKLELPTDHHGVFGHLVDSYAYMRNGWDVEVSAVGNQFNGGCLLVAMVPEWKEFDKREKYQLTLFPHQFISPRTNMTAHITVPYLGVNRYDQYKKHKPWTLVIMVVSPLTVSNTAATQIKVYANIAPTYVHVAGELPSKEGIFPVACSDGYGGLVTTDPKTADPVYGKVYNPPRTNYPGRFTNLLDVAEACPTFLCFDDGKPYVVTRTDDTRLLAKFDVSLAAKHMSNTYLSGIAQYYTQYSGTINLHFMFTGSTDSKARYMVAYIPPGVETPPETPEGAAHCIHAEWDTGLNSKFTFSIPYVSAADYAYTASDTAETTNVQGWVCIYQITHGKAEGDTLVVSASAGKDFELRLPIDPRSQTTATGESADPVTTTVENYGGETQVQRRHHTDVSFIMDRFVKIKSLNPTHVIDLMQTHQHGLVGALLRAATYYFSDLEIVVRHDGNLTWVPNGAPEAALSNTGNPTAYNKAPFTRLALPYTAPHRVLATVYNGTNKYSASGSGVRGDSGSLAPRVARQLPASFNYGAIKAETIHELLVRMKRAELYCPRPLLAIEVSSQDRHKQKIIAPGKQLLNFDLLKLAGDVESNPGPFFFADVRSNFSKLVDTINQMQEDMSTKHGPDFNRLVSAFEELATGVKAIRTGLDEAKPWYKLIKLLSRLSCMAAVAARSKDPVLVAIMLADTGLEILDSTFVVKKISDSLSSLFHVPAPVFSFGAPVLLAGLVKVASSFFRSTPEDLERAEKQLKARDINDIFAILKNGEWLVKLILAIRDWIKAWIASEEKFVTTTDLVPGILEKQRDLNDPSKYKEAKEWLDNARQACLKSGNVHIANLCKVVAPAPSKSRPEPVVVCLRGKSGQGKSFLANVLAQAISTHFTGRTDSVWYCPPDPDHFDGYNQQTVVVMDDLGQNPDGKDFKYFAQMVSTTGFIPPMASLEDKGKPFNSKVIIATTNLYSGFTPRTMVCPDALNRRFHFDIDVSAKDGYKINNKLDIIKALEDTHTNPVAMFQYDCALLNGMAVEMKRMQQDMFKPQPPLQNVYQLVQEVIERVELHEKVSSHPIFKQISIPSQKSVLYFLIEKGQHEAAIEFFEGMVHDSIKEELRPLIQQTSFVKRAFKRLKENFEIVALCLTLLANIVIMIRETRKRQKMVDDAVNEYIEKANITTDDTTLDEAEKNPLETSGASTVGFRERTLTGQRACNDVNSEPARPAEEQPQAEGPYTGPLERQRPLKVRAKLPQQEGPYAGPLERQKPLKVKAKAPVVKEGPYEGPVKKPVALKVKAKNLIVTESGAPPTDLQKMVMGNTKPVELILDGKTVAICCATGVFGTAYLVPRHLFAEKYDKIMLDGRAMTDSDYRVFEFEIKVKGQDMLSDAALMVLHRGNRVRDITKHFRDTARMKKGTPVVGVVNNADVGRLIFSGEALTYKDIVVCMDGDTMPGLFAYKAATKAGYCGGAVLAKDGADTFIVGTHSAGGNGVGYCSCVSRSMLLRMKAHVDPEPHHEGLIVDTRDVEERVHVMRKTKLAPTVAHGVFNPEFGPAALSNKDPRLNEGVVLDEVIFSKHKGDTKMSAEDKALFRRCAADYASRLHSVLGTANAPLSIYEAIKGVDGLDAMESDTAPGLPWAFQGKRRGALIDFENGTVGPEVEAALKLMEKREYKFACQTFLKDEIRPMEKVRAGKTRIVDVLPVEHILYTRMMIGRFCAQMHSNNGPQIGSAVGCNPDVDWQRFGTHFAQYRNVWDVDYSAFDANHCSDAMNIMFEEVFRTDFGFHPNAEWILKTLVNTEHAYENKRITVEGGMPSGCSATSIINTILNNIYVLYALRRHYEGVELDTYTMISYGDDIVVASDYDLDFEALKPHFKSLGQTITPADKSDKGFVLGHSITDVTFLKRHFHIDYGTGFYKPVMASKTLEAILSFARRGTIQEKLTSVAGLAVHSGPDEYRRLFEPFQGLFEIPSYRSLYLRWVNAVCGDA.

The Peptidase C28 domain occupies 1–201 (MNTTNCFIAL…WKANVQRKLK (201 aa)). Topologically, residues 1–1481 (MNTTNCFIAL…SFVKRAFKRL (1481 aa)) are cytoplasmic. Catalysis depends on for leader protease activity residues C51, H148, and D163. Disordered regions lie at residues 199 to 218 (KLKG…QSGN) and 238 to 265 (QLGD…NTQN). G202 carries the N-myristoyl glycine; by host lipid modification. Polar residues-rich tracts occupy residues 204 to 218 (GQSS…QSGN) and 238 to 251 (QLGD…SNEG). The span at 252–265 (STDTTSTHTTNTQN) shows a compositional bias: low complexity. Residues 789 to 797 (ALLRAATYY) form an antigenic epitope region. The short motif at 869 to 871 (RGD) is the Cell attachment site element. Positions 1190–1354 (NVHIANLCKV…DGYKINNKLD (165 aa)) constitute an SF3 helicase domain. Position 1218–1225 (1218–1225 (GKSGQGKS)) interacts with ATP. The stretch at 1482 to 1502 (KENFEIVALCLTLLANIVIMI) is an intramembrane region. Residues 1503–2333 (RETRKRQKMV…RWVNAVCGDA (831 aa)) lie on the Cytoplasmic side of the membrane. Positions 1562–1589 (NDVNSEPARPAEEQPQAEGPYTGPLERQ) are disordered. 3 positions are modified to O-(5'-phospho-RNA)-tyrosine: Y1582, Y1605, and Y1629. Residues 1653-1849 (APPTDLQKMV…YCSCVSRSML (197 aa)) enclose the Peptidase C3 domain. H1696 acts as the For protease 3C activity; Proton donor/acceptor in catalysis. Residues D1734 and C1813 each act as for protease 3C activity in the active site. The short motif at 1879–1887 (MRKTKLAPT) is the Nuclear localization signal element. A RdRp catalytic domain is found at 2097-2215 (RNVWDVDYSA…ASDYDLDFEA (119 aa)). The active-site For RdRp activity is the G2200.

This sequence belongs to the picornaviruses polyprotein family. As to quaternary structure, interacts with host ISG15. Interacts (via R-G-D motif) with host ITGAV/ITGB6. Interacts with host MAVS; this interaction inhibits binding of host TRAF3 to MAVS, thereby suppressing interferon-mediated responses. In terms of assembly, forms homooligomers. As to quaternary structure, homohexamer. Interacts with host VIM. Interacts with host BECN1. Interacts with host DCTN3. In terms of assembly, interacts with RNA-dependent RNA polymerase; this interaction allows 3B-1 to binds 2 polymerases and act as a primer. It also allows the recruitment of the RNA-dependent RNA polymerase to host membranes. As to quaternary structure, interacts with RNA-dependent RNA polymerase; this interaction allows 3B-2 to act as a primer. Interacts with RNA-dependent RNA polymerase; this interaction allows 3B-3 to act as a primer. In terms of assembly, interacts with 3B-1; this interaction allows 3B-1 to binds 2 polymerases and act as a primer. It also allows the recruitment of the RNA-dependent RNA polymerase to host membranes. Interacts with 3B-2; this interaction allows 3B-2 to act as a primer. Interacts with 3B-3; this interaction allows 3B-3 to act as a primer. Post-translationally, removes six residues from its own C-terminus, generating sLb(pro). Specific enzymatic cleavages in vivo by the viral proteases yield a variety of precursors and mature proteins. The polyprotein seems to be cotranslationally cleaved at the 2A/2B junction by a ribosomal skip from one codon to the next without formation of a peptide bond. This process would release the L-P1-2A peptide from the translational complex. In terms of processing, during virion maturation, immature virions are rendered infectious following cleavage of VP0 into VP4 and VP2. This maturation seems to be an autocatalytic event triggered by the presence of RNA in the capsid and is followed by a conformational change of the particle. Post-translationally, myristoylation is required during RNA encapsidation and formation of the mature virus particle. Uridylylated by the polymerase and covalently linked to the 5'-end of genomic RNA. These uridylylated forms act as a nucleotide-peptide primer for the polymerase.

The protein resides in the host nucleus. Its subcellular location is the host cytoplasm. The protein localises to the virion. It is found in the host endoplasmic reticulum membrane. It localises to the host cytoplasmic vesicle membrane. The enzyme catalyses Autocatalytically cleaves itself from the polyprotein of the foot-and-mouth disease virus by hydrolysis of a Lys-|-Gly bond, but then cleaves host cell initiation factor eIF-4G at bonds -Gly-|-Arg- and -Lys-|-Arg-.. The catalysed reaction is a ribonucleoside 5'-triphosphate + H2O = a ribonucleoside 5'-diphosphate + phosphate + H(+). It catalyses the reaction RNA(n) + a ribonucleoside 5'-triphosphate = RNA(n+1) + diphosphate. It carries out the reaction Selective cleavage of Gln-|-Gly bond in the poliovirus polyprotein. In other picornavirus reactions Glu may be substituted for Gln, and Ser or Thr for Gly.. Functionally, autocatalytically cleaves itself from the polyprotein at the L/VP0 junction. Also cleaves the host translation initiation factors EIF4G1 and EIF4G3, in order to shut off the capped cellular mRNA transcription. Plays a role in counteracting host innate antiviral response using diverse mechanisms. Possesses a deubiquitinase activity acting on both 'Lys-48' and 'Lys-63'-linked polyubiquitin chains. In turn, inhibits the ubiquitination and subsequent activation of key signaling molecules of type I IFN response such as host RIGI, TBK1, TRAF3 and TRAF6. Inhibits host NF-kappa-B activity by inducing a decrease in RELA mRNA levels. Cleaves a peptide bond in the C-terminus of host ISG15, resulting in the damaging of this modifier that can no longer be attached to target proteins. Also cleaves host G3BP1 and G3BP2 in order to inhibit cytoplasmic stress granules assembly. Its function is as follows. Lies on the inner surface of the capsid shell. After binding to the host receptor, the capsid undergoes conformational changes. Capsid protein VP4 is released, capsid protein VP1 N-terminus is externalized, and together, they shape a pore in the host membrane through which the viral genome is translocated into the host cell cytoplasm. After genome has been released, the channel shrinks. Forms an icosahedral capsid of pseudo T=3 symmetry with capsid proteins VP1 and VP3. The capsid is composed of 60 copies of each capsid protein organized in the form of twelve pentamers and encloses the viral positive strand RNA genome. Upon acidifcation in the endosome, dissociates into pentamers. In terms of biological role, forms an icosahedral capsid of pseudo T=3 symmetry with capsid proteins VP0 and VP3. The capsid is composed of 60 copies of each capsid protein organized in the form of twelve pentamers and encloses the viral positive strand RNA genome. Upon acidifcation in the endosome, dissociates into pentamers. Functionally, forms an icosahedral capsid of pseudo T=3 symmetry with capsid proteins VP2 and VP3. The capsid is composed of 60 copies of each capsid protein organized in the form of twelve pentamers and encloses the viral positive strand RNA genome. Mediates cell entry by attachment to an integrin receptor, usually host ITGAV/ITGB6. In addition, targets host MAVS to suppress type I IFN pathway. Upon acidifcation in the endosome, dissociates into pentamers. Its function is as follows. Mediates self-processing of the polyprotein by a translational effect termed 'ribosome skipping'. Mechanistically, 2A-mediated cleavage occurs between the C-terminal glycine and the proline of the downstream protein 2B. In the case of foot-and-mouth disease virus, the 2A oligopeptide is post-translationally 'trimmed' from the C-terminus of the upstream protein 1D by 3C proteinase. Plays an essential role in the virus replication cycle by acting as a viroporin. Creates a pore in the host endoplasmic reticulum and as a consequence releases Ca2+ in the cytoplasm of infected cell. In turn, high levels of cytoplasmic calcium may trigger membrane trafficking and transport of viral ER-associated proteins to viroplasms, sites of viral genome replication. In terms of biological role, associates with and induces structural rearrangements of intracellular membranes. Triggers host autophagy by interacting with host BECN1 and thereby promotes viral replication. Participates in viral replication and interacts with host DHX9. Displays RNA-binding, nucleotide binding and NTPase activities. May play a role in virion morphogenesis and viral RNA encapsidation by interacting with the capsid protein VP3. Functionally, plays important roles in virus replication, virulence and host range. Its function is as follows. Covalently linked to the 5'-end of both the positive-strand and negative-strand genomic RNAs. Acts as a genome-linked replication primer. Cysteine protease that generates mature viral proteins from the precursor polyprotein. In addition to its proteolytic activity, binds to viral RNA and thus influences viral genome replication. RNA and substrate bind cooperatively to the protease. In terms of biological role, RNA-directed RNA polymerase 3D-POL replicates genomic and antigenomic RNA by recognizing replications specific signals. Covalently attaches UMP to a tyrosine of VPg, which is used to prime RNA synthesis. The positive stranded RNA genome is first replicated at virus induced membranous vesicles, creating a dsRNA genomic replication form. This dsRNA is then used as template to synthesize positive stranded RNA genomes. ss(+)RNA genomes are either translated, replicated or encapsidated. In Foot-and-mouth disease virus (isolate Bovine/United Kingdom/A12Valle119/1932 serotype A) (FMDV), this protein is Genome polyprotein.